A 606-amino-acid chain; its full sequence is NADH-ubiquinone oxidoreductase chain 5 (606 aa).

Transmembrane regions (helical) follow at residues 3–23 (VINLIPTLTLTSLIILTLPIT), 38–58 (ITKMAVTCAFAISLIPTLLFL), 87–107 (FFSLTFMPIALFITWSIMEFS), 124–144 (LLLFLITMLILVSANNLLQLF), 180–200 (IGDMGFIMMMAWFIIHLNSWE), 216–236 (LLGLLLASAGKSAQFGLHPWL), 244–264 (TPVSALLHSSTMVMAGVFTLI), 276–296 (IQTSTLCLGAITTLFTAICAL), 304–323 (IIALSTSSQLGLMMVTIGIN), 328–350 (AFTHMCTHAFFKAMLFLSSGSII), 369–389 (MPITSTAIIIGSLALTGMPFL), 404–424 (MSYINTWALLITLIAVSMTAS), 460–480 (LILGSIFMGFFISMNTIPHTT), 483–503 (MTMPPHLKFMALAVTLLGFTV), and 586–606 (LMKLYFLSFLLSITLGLLITL).

This sequence belongs to the complex I subunit 5 family. Core subunit of respiratory chain NADH dehydrogenase (Complex I) which is composed of 45 different subunits.

It localises to the mitochondrion inner membrane. It carries out the reaction a ubiquinone + NADH + 5 H(+)(in) = a ubiquinol + NAD(+) + 4 H(+)(out). Functionally, core subunit of the mitochondrial membrane respiratory chain NADH dehydrogenase (Complex I) which catalyzes electron transfer from NADH through the respiratory chain, using ubiquinone as an electron acceptor. Essential for the catalytic activity and assembly of complex I. The chain is NADH-ubiquinone oxidoreductase chain 5 (MT-ND5) from Elephas maximus (Indian elephant).